The sequence spans 329 residues: Quinone oxidoreductase (329 aa).

Ala-2 bears the N-acetylalanine mark. Lys-23 carries the post-translational modification N6-acetyllysine. NADP(+)-binding positions include Tyr-53, 158–161 (SGGV), Gly-181, His-200, Asn-229, 246–249 (VGSR), and 269–271 (VTV). Ser-248 bears the Phosphoserine mark. Lys-296 carries the post-translational modification N6-succinyllysine.

This sequence belongs to the zinc-containing alcohol dehydrogenase family. Quinone oxidoreductase subfamily. As to quaternary structure, homotetramer.

It localises to the cytoplasm. The catalysed reaction is 2 a quinone + NADPH + H(+) = 2 a 1,4-benzosemiquinone + NADP(+). Its function is as follows. Does not have alcohol dehydrogenase activity. Binds NADP and acts through a one-electron transfer process. Orthoquinones, such as 1,2-naphthoquinone or 9,10-phenanthrenequinone, are the best substrates (in vitro). May act in the detoxification of xenobiotics. Interacts with (AU)-rich elements (ARE) in the 3'-UTR of target mRNA species and enhances their stability. NADPH binding interferes with mRNA binding. In Pongo abelii (Sumatran orangutan), this protein is Quinone oxidoreductase (CRYZ).